Consider the following 872-residue polypeptide: Bifunctional heparan sulfate N-deacetylase/N-sulfotransferase 4 (872 aa).

Topologically, residues 1–13 (MNLILKFRRSFRT) are cytoplasmic. A helical; Signal-anchor for type II membrane protein transmembrane segment spans residues 14 to 34 (LIVLLATFCLVSILISAYFLY). Over 35–872 (SGYKQEMTLI…WLRQELQKVR (838 aa)) the chain is Lumenal. A heparan sulfate N-deacetylase 4 region spans residues 36 to 588 (GYKQEMTLIE…KRHKDIWSRE (553 aa)). N226, N341, and N391 each carry an N-linked (GlcNAc...) asparagine glycan. Positions 589 to 872 (KTCDHLPKFL…WLRQELQKVR (284 aa)) are heparan sulfate N-sulfotransferase 4. The active-site For sulfotransferase activity is the K604. Position 604 to 608 (604 to 608 (KTGTT)) interacts with 3'-phosphoadenylyl sulfate. Residue N657 is glycosylated (N-linked (GlcNAc...) asparagine). S702 contacts 3'-phosphoadenylyl sulfate. The N-linked (GlcNAc...) asparagine glycan is linked to N793. C808 and C818 form a disulfide bridge. 3'-phosphoadenylyl sulfate is bound at residue 823–827 (KGRKY).

The protein belongs to the sulfotransferase 1 family. NDST subfamily. As to quaternary structure, monomer. Expressed at low level in brain and throughout embryogenesis. Not expressed in other tissues.

The protein resides in the golgi apparatus membrane. The enzyme catalyses alpha-D-glucosaminyl-[heparan sulfate](n) + 3'-phosphoadenylyl sulfate = N-sulfo-alpha-D-glucosaminyl-[heparan sulfate](n) + adenosine 3',5'-bisphosphate + 2 H(+). The protein operates within glycan metabolism; heparan sulfate biosynthesis. It participates in glycan metabolism; heparin biosynthesis. Essential bifunctional enzyme that catalyzes both the N-deacetylation and the N-sulfation of glucosamine (GlcNAc) of the glycosaminoglycan in heparan sulfate. Modifies the GlcNAc-GlcA disaccharide repeating sugar backbone to make N-sulfated heparosan, a prerequisite substrate for later modifications in heparin biosynthesis. Has low deacetylase activity but high sulfotransferase activity. This is Bifunctional heparan sulfate N-deacetylase/N-sulfotransferase 4 (Ndst4) from Mus musculus (Mouse).